A 390-amino-acid chain; its full sequence is D-alanyl-D-alanine carboxypeptidase DacD (390 aa).

Positions 1–23 (MLLKRRLFIAASLFAMHLSPALA) are cleaved as a signal peptide. The active-site Acyl-ester intermediate is the Ser-65. The active-site Proton acceptor is the Lys-68. Ser-131 is an active-site residue. Lys-234 serves as a coordination point for substrate.

The protein belongs to the peptidase S11 family.

It localises to the cell inner membrane. The catalysed reaction is Preferential cleavage: (Ac)2-L-Lys-D-Ala-|-D-Ala. Also transpeptidation of peptidyl-alanyl moieties that are N-acyl substituents of D-alanine.. It functions in the pathway cell wall biogenesis; peptidoglycan biosynthesis. In terms of biological role, removes C-terminal D-alanyl residues from sugar-peptide cell wall precursors. This chain is D-alanyl-D-alanine carboxypeptidase DacD (dacD), found in Salmonella typhimurium (strain LT2 / SGSC1412 / ATCC 700720).